The chain runs to 130 residues: Blasticidin-S deaminase (130 aa).

In terms of domain architecture, CMP/dCMP-type deaminase spans 1-129; that stretch reads MPLSQEESTL…ELLPSGYMNR (129 aa). Residue S28 coordinates substrate. C54 is a Zn(2+) binding site. The Proton donor role is filled by E56. R82 serves as a coordination point for substrate. Zn(2+) is bound by residues C88 and C91. Y126 contributes to the substrate binding site.

It belongs to the cytidine and deoxycytidylate deaminase family. In terms of assembly, homotetramer. The cofactor is Zn(2+).

It carries out the reaction blasticidin S + H2O + H(+) = deaminohydroxyblasticidin S + NH4(+). In terms of biological role, catalyzes the deamination of the cytosine moiety of the antibiotics blasticidin S, cytomycin and acetylblasticidin S. The chain is Blasticidin-S deaminase (bsd) from Aspergillus terreus (strain NIH 2624 / FGSC A1156).